The primary structure comprises 142 residues: Ribosome maturation factor RimP (142 aa).

Belongs to the RimP family.

The protein resides in the cytoplasm. Its function is as follows. Required for maturation of 30S ribosomal subunits. This chain is Ribosome maturation factor RimP, found in Aromatoleum aromaticum (strain DSM 19018 / LMG 30748 / EbN1) (Azoarcus sp. (strain EbN1)).